The primary structure comprises 293 residues: Glutamyl-Q tRNA(Asp) synthetase (293 aa).

L-glutamate-binding positions include 9–13 and glutamate 45; that span reads RFAPS. Positions 12–22 match the 'HIGH' region motif; that stretch reads PSPSGSLHFGS. Zn(2+) contacts are provided by cysteine 101, cysteine 103, tyrosine 115, and cysteine 119. L-glutamate contacts are provided by tyrosine 172 and arginine 190. A 'KMSKS' region motif is present at residues 228-232; that stretch reads KLSKQ. Lysine 231 provides a ligand contact to ATP.

Belongs to the class-I aminoacyl-tRNA synthetase family. GluQ subfamily. It depends on Zn(2+) as a cofactor.

Catalyzes the tRNA-independent activation of glutamate in presence of ATP and the subsequent transfer of glutamate onto a tRNA(Asp). Glutamate is transferred on the 2-amino-5-(4,5-dihydroxy-2-cyclopenten-1-yl) moiety of the queuosine in the wobble position of the QUC anticodon. This is Glutamyl-Q tRNA(Asp) synthetase from Shewanella frigidimarina (strain NCIMB 400).